Consider the following 353-residue polypeptide: Photosystem II D2 protein (353 aa).

N-acetylthreonine is present on T2. T2 carries the phosphothreonine modification. The helical transmembrane segment at 41 to 61 (CAYFALGGWFTGTTFVTSWYT) threads the bilayer. Chlorophyll a is bound at residue H118. A helical transmembrane segment spans residues 125 to 141 (GFMLRQFELARSVQLRP). Q130 and N143 together coordinate pheophytin a. The chain crosses the membrane as a helical span at residues 153 to 166 (VFVSVFLIYPLGQS). H198 lines the chlorophyll a pocket. The chain crosses the membrane as a helical span at residues 208–228 (AALLCAIHGATVENTLFEDGD). A plastoquinone-binding residues include H215 and F262. H215 lines the Fe cation pocket. H269 is a binding site for Fe cation. A helical transmembrane segment spans residues 279-295 (GLWMSALGVVGLALNLR).

This sequence belongs to the reaction center PufL/M/PsbA/D family. As to quaternary structure, PSII is composed of 1 copy each of membrane proteins PsbA, PsbB, PsbC, PsbD, PsbE, PsbF, PsbH, PsbI, PsbJ, PsbK, PsbL, PsbM, PsbT, PsbX, PsbY, PsbZ, Psb30/Ycf12, at least 3 peripheral proteins of the oxygen-evolving complex and a large number of cofactors. It forms dimeric complexes. The cofactor is The D1/D2 heterodimer binds P680, chlorophylls that are the primary electron donor of PSII, and subsequent electron acceptors. It shares a non-heme iron and each subunit binds pheophytin, quinone, additional chlorophylls, carotenoids and lipids. There is also a Cl(-1) ion associated with D1 and D2, which is required for oxygen evolution. The PSII complex binds additional chlorophylls, carotenoids and specific lipids..

Its subcellular location is the plastid. The protein localises to the chloroplast thylakoid membrane. The catalysed reaction is 2 a plastoquinone + 4 hnu + 2 H2O = 2 a plastoquinol + O2. Photosystem II (PSII) is a light-driven water:plastoquinone oxidoreductase that uses light energy to abstract electrons from H(2)O, generating O(2) and a proton gradient subsequently used for ATP formation. It consists of a core antenna complex that captures photons, and an electron transfer chain that converts photonic excitation into a charge separation. The D1/D2 (PsbA/PsbD) reaction center heterodimer binds P680, the primary electron donor of PSII as well as several subsequent electron acceptors. D2 is needed for assembly of a stable PSII complex. This is Photosystem II D2 protein from Morus indica (Mulberry).